A 537-amino-acid chain; its full sequence is Glutamyl-tRNA(Gln) amidotransferase subunit A, chloroplastic/mitochondrial (537 aa).

Residues lysine 116 and serine 191 each act as charge relay system in the active site. The Acyl-ester intermediate role is filled by serine 215.

The protein belongs to the amidase family. GatA subfamily. As to quaternary structure, subunit of the heterotrimeric GatCAB amidotransferase (AdT) complex, composed of A, B and C subunits.

The protein localises to the mitochondrion. It localises to the plastid. It is found in the chloroplast stroma. It catalyses the reaction L-glutamyl-tRNA(Gln) + L-glutamine + ATP + H2O = L-glutaminyl-tRNA(Gln) + L-glutamate + ADP + phosphate + H(+). Allows the formation of correctly charged Gln-tRNA(Gln) through the transamidation of misacylated Glu-tRNA(Gln) in chloroplasts and mitochondria. The reaction takes place in the presence of glutamine and ATP through an activated gamma-phospho-Glu-tRNA(Gln). In Arabidopsis thaliana (Mouse-ear cress), this protein is Glutamyl-tRNA(Gln) amidotransferase subunit A, chloroplastic/mitochondrial.